The following is a 290-amino-acid chain: uncharacterized protein (290 aa).

Disordered stretches follow at residues cysteine 89–serine 157, methionine 172–serine 217, and threonine 261–lysine 290. Composition is skewed to basic and acidic residues over residues aspartate 106–proline 124 and lysine 142–serine 152. Polar residues-rich tracts occupy residues methionine 172–glycine 183 and lysine 193–threonine 202. 2 stretches are compositionally biased toward low complexity: residues methionine 207–serine 217 and proline 274–lysine 290.

This is an uncharacterized protein from Caenorhabditis elegans.